The sequence spans 124 residues: UPF0482 protein YpsIP31758_1865 (124 aa).

The first 32 residues, 1–32, serve as a signal peptide directing secretion; it reads MMKINNLPRLIRTFLPATLLMLPLVWQTPALA. The segment at 47–68 is disordered; it reads GGNNDPMSKEQARQSQQQWDET.

This sequence belongs to the UPF0482 family.

The sequence is that of UPF0482 protein YpsIP31758_1865 from Yersinia pseudotuberculosis serotype O:1b (strain IP 31758).